The primary structure comprises 131 residues: MKKHGVLNSEIAAILAALGHTDTIVIADCGLPIPDSVKRIDLAVELGKPSFLDVLQVVIEDMAIEKVTVAEEITTNNREIYKEIETRLKEANFEYVLHEEFKEKTKQAKAIIRTGEATPYANIILHAGVIF.

H20 (proton donor) is an active-site residue. Residues D28, H98, and 120–122 (YAN) contribute to the substrate site.

Belongs to the RbsD / FucU family. RbsD subfamily. As to quaternary structure, homodecamer.

It localises to the cytoplasm. It catalyses the reaction beta-D-ribopyranose = beta-D-ribofuranose. The protein operates within carbohydrate metabolism; D-ribose degradation; D-ribose 5-phosphate from beta-D-ribopyranose: step 1/2. In terms of biological role, catalyzes the interconversion of beta-pyran and beta-furan forms of D-ribose. In Bacillus cytotoxicus (strain DSM 22905 / CIP 110041 / 391-98 / NVH 391-98), this protein is D-ribose pyranase.